The primary structure comprises 84 residues: ATP synthase subunit c (84 aa).

A run of 2 helical transmembrane segments spans residues A21–I38 and M60–L80.

Belongs to the ATPase C chain family. In terms of assembly, F-type ATPases have 2 components, F(1) - the catalytic core - and F(0) - the membrane proton channel. F(1) has five subunits: alpha(3), beta(3), gamma(1), delta(1), epsilon(1). F(0) has three main subunits: a(1), b(2) and c(10-14). The alpha and beta chains form an alternating ring which encloses part of the gamma chain. F(1) is attached to F(0) by a central stalk formed by the gamma and epsilon chains, while a peripheral stalk is formed by the delta and b chains.

The protein resides in the cell inner membrane. Functionally, f(1)F(0) ATP synthase produces ATP from ADP in the presence of a proton or sodium gradient. F-type ATPases consist of two structural domains, F(1) containing the extramembraneous catalytic core and F(0) containing the membrane proton channel, linked together by a central stalk and a peripheral stalk. During catalysis, ATP synthesis in the catalytic domain of F(1) is coupled via a rotary mechanism of the central stalk subunits to proton translocation. In terms of biological role, key component of the F(0) channel; it plays a direct role in translocation across the membrane. A homomeric c-ring of between 10-14 subunits forms the central stalk rotor element with the F(1) delta and epsilon subunits. The sequence is that of ATP synthase subunit c from Phocaeicola vulgatus (strain ATCC 8482 / DSM 1447 / JCM 5826 / CCUG 4940 / NBRC 14291 / NCTC 11154) (Bacteroides vulgatus).